Here is a 318-residue protein sequence, read N- to C-terminus: MKLDFLDFEQPIAELEAKIDELRHLDGQDMDLIKEVSALEQKSKNLTQSIFNRLSDVQVAQVARHPQRPYMLDYLKEMFTDFKEMHGDRAFADDAAIVGGLARINGQAVMVIGQEKGRDTKEKIRRNFGMPRPEGYRKALRLMKTAETFGLPVLTFIDTPGAYPGINAEERGQSEAIARNLIEMSELKVPVICTVIGEGGSGGALAIGVGDVTMMMQYSTYSVISPEGCASILWKDAANAADAASALGITAPRLKELGLVDEIVEEPLGGAHRNPSAAASSLKDAILRQLELLKNKPVDELLETRYQRYMQYGNFDVA.

Residues 31–292 (DLIKEVSALE…KDAILRQLEL (262 aa)) form the CoA carboxyltransferase C-terminal domain.

The protein belongs to the AccA family. Acetyl-CoA carboxylase is a heterohexamer composed of biotin carboxyl carrier protein (AccB), biotin carboxylase (AccC) and two subunits each of ACCase subunit alpha (AccA) and ACCase subunit beta (AccD).

Its subcellular location is the cytoplasm. It carries out the reaction N(6)-carboxybiotinyl-L-lysyl-[protein] + acetyl-CoA = N(6)-biotinyl-L-lysyl-[protein] + malonyl-CoA. Its pathway is lipid metabolism; malonyl-CoA biosynthesis; malonyl-CoA from acetyl-CoA: step 1/1. Functionally, component of the acetyl coenzyme A carboxylase (ACC) complex. First, biotin carboxylase catalyzes the carboxylation of biotin on its carrier protein (BCCP) and then the CO(2) group is transferred by the carboxyltransferase to acetyl-CoA to form malonyl-CoA. This is Acetyl-coenzyme A carboxylase carboxyl transferase subunit alpha from Hydrogenovibrio crunogenus (strain DSM 25203 / XCL-2) (Thiomicrospira crunogena).